We begin with the raw amino-acid sequence, 92 residues long: Neuropeptide F (92 aa).

Positions 1-27 (MSQSRPLALLVVAALVAAAVLVAAAEA) are cleaved as a signal peptide. Residues 28–51 (QQADGNKLEGLADALKYLQELDRY) constitute a propeptide that is removed on maturation. Phe-60 carries the post-translational modification Phenylalanine amide. Positions 64-92 (AELRPDVVDDVIPEEMSADKFWRRFARRR) are excised as a propeptide.

It belongs to the NPY family. As to expression, widely expressed in the nervous system. Expressed in corpora cardiaca, hypocerebral ganglion, frontal ganglion, protocerebrum, antennal lobe, tritocerebrum and thoracic ganglia. Not detected in corpora allata, pars intercerebralis, circumesophageal connectives, subesophageal ganglion, abdominal ganglion and abdominal perisympathetic organs.

It is found in the secreted. In terms of biological role, accelerates ovarian maturation in females. This chain is Neuropeptide F, found in Locusta migratoria (Migratory locust).